An 804-amino-acid polypeptide reads, in one-letter code: Leucine--tRNA ligase (804 aa).

The short motif at 39–50 is the 'HIGH' region element; that stretch reads PFPSGKGLHVGH. A 'KMSKS' region motif is present at residues 573 to 577; that stretch reads KMSKS. Lys-576 serves as a coordination point for ATP.

It belongs to the class-I aminoacyl-tRNA synthetase family.

Its subcellular location is the cytoplasm. It carries out the reaction tRNA(Leu) + L-leucine + ATP = L-leucyl-tRNA(Leu) + AMP + diphosphate. The sequence is that of Leucine--tRNA ligase from Lactobacillus johnsonii (strain CNCM I-12250 / La1 / NCC 533).